Here is a 358-residue protein sequence, read N- to C-terminus: Methylthioribose-1-phosphate isomerase (358 aa).

Substrate-binding positions include 54–56 (RGA), arginine 96, and glutamine 205. Aspartate 246 functions as the Proton donor in the catalytic mechanism. 256–257 (NK) contributes to the substrate binding site.

This sequence belongs to the eIF-2B alpha/beta/delta subunits family. MtnA subfamily.

The enzyme catalyses 5-(methylsulfanyl)-alpha-D-ribose 1-phosphate = 5-(methylsulfanyl)-D-ribulose 1-phosphate. Its pathway is amino-acid biosynthesis; L-methionine biosynthesis via salvage pathway; L-methionine from S-methyl-5-thio-alpha-D-ribose 1-phosphate: step 1/6. Its function is as follows. Catalyzes the interconversion of methylthioribose-1-phosphate (MTR-1-P) into methylthioribulose-1-phosphate (MTRu-1-P). The chain is Methylthioribose-1-phosphate isomerase from Pseudomonas fluorescens (strain Pf0-1).